The sequence spans 108 residues: UPF0145 protein Ava_0420 (108 aa).

The protein belongs to the UPF0145 family.

This is UPF0145 protein Ava_0420 from Trichormus variabilis (strain ATCC 29413 / PCC 7937) (Anabaena variabilis).